The chain runs to 514 residues: MISFFTKTTDMMTSKKRWTALVVLAVSLFVVTMDMTILIMALPELVRELEPSGTQQLWIVDIYSLVLAGFIIPLSAFADKWGRKKALLTGFALFGLVSLAIFFAESAEFVIAIRFLLGIAGALIMPTTLSMIRVIFENPKERATALAVWSIASSIGAVFGPIIGGALLEQFSWHSAFLINVPFAIIAVVAGLFLLPESKLSKEKSHSWDIPSTILSIAGMIGLVWSIKEFSKEGLADIIPWVVIVLAITMIVIFVKRNLSSSDPMLDVRLFKKRSFSAGTIAAFMTMFAMASVLLLASQWLQVVEELSPFKAGLYLLPMAIGDMVFAPIAPGLAARFGPKIVLPSGIGIAAIGMFIMYFFGHPLSYSTMALALILVGAGMASLAVASALIMLETPTSKAGNAAAVEESMYDLGNVFGVAVLGSLSSMLYRVFLDISSFSSKGIVGDLAHVAEESVVGAVEVAKATGIKQLANEAVTSFNDAFVATALVGGIIMIIISIVVYLLIPKSLDITKQK.

Over Met1–Val23 the chain is Cytoplasmic. The chain crosses the membrane as a helical span at residues Leu24–Ala41. The Extracellular segment spans residues Leu42–Leu57. The helical transmembrane segment at Trp58–Ser75 threads the bilayer. At Ala76–Ala86 the chain is on the cytoplasmic side. The chain crosses the membrane as a helical span at residues Leu87–Ala104. Over Glu105–Ala112 the chain is Extracellular. The chain crosses the membrane as a helical span at residues Ile113–Ser130. Topologically, residues Met131 to Leu146 are cytoplasmic. The helical transmembrane segment at Ala147 to Gly164 threads the bilayer. Topologically, residues Gly165 to Ser172 are extracellular. A helical membrane pass occupies residues Trp173 to Ala190. Residues Gly191–Ser207 lie on the Cytoplasmic side of the membrane. Residues Trp208–Trp225 traverse the membrane as a helical segment. The Extracellular portion of the chain corresponds to Ser226 to Asp237. A helical transmembrane segment spans residues Ile238–Val255. At Lys256–Ala278 the chain is on the cytoplasmic side. The helical transmembrane segment at Gly279–Leu295 threads the bilayer. Topologically, residues Leu296–Tyr315 are extracellular. The helical transmembrane segment at Leu316–Leu333 threads the bilayer. The Cytoplasmic segment spans residues Ala334–Ile341. A helical membrane pass occupies residues Val342 to Phe360. At Gly361 to Met369 the chain is on the extracellular side. A helical transmembrane segment spans residues Ala370–Ser387. Over Ala388–Ser408 the chain is Cytoplasmic. A helical transmembrane segment spans residues Met409–Ser426. Topologically, residues Met427 to Ala481 are extracellular. Residues Phe482–Val499 traverse the membrane as a helical segment. The Cytoplasmic segment spans residues Val500 to Lys514.

Belongs to the major facilitator superfamily.

It is found in the cell membrane. In terms of biological role, confers export-mediated resistance against antiseptic and disinfectant compounds such as intercalating dyes, quaternary ammonium salts and diamidines. The polypeptide is Antiseptic resistance protein (qacA) (Staphylococcus aureus (strain Mu50 / ATCC 700699)).